The primary structure comprises 391 residues: 3-ketoacyl-CoA thiolase (391 aa).

C95 acts as the Acyl-thioester intermediate in catalysis. Catalysis depends on proton acceptor residues H347 and C377.

The protein belongs to the thiolase-like superfamily. Thiolase family. In terms of assembly, heterotetramer of two alpha chains (FadB) and two beta chains (FadA).

Its subcellular location is the cytoplasm. It catalyses the reaction an acyl-CoA + acetyl-CoA = a 3-oxoacyl-CoA + CoA. Its pathway is lipid metabolism; fatty acid beta-oxidation. In terms of biological role, catalyzes the final step of fatty acid oxidation in which acetyl-CoA is released and the CoA ester of a fatty acid two carbons shorter is formed. In Pseudomonas entomophila (strain L48), this protein is 3-ketoacyl-CoA thiolase.